Here is a 674-residue protein sequence, read N- to C-terminus: L-type lectin-domain containing receptor kinase SIT1 (674 aa).

Residues 1-27 form the signal peptide; the sequence is MRRPELIMRSLPLILFLSLGSFHLAAA. Residues 28–301 are Extracellular-facing; it reads AVDDQFTFDG…IARAPSNVLK (274 aa). The tract at residues 31 to 275 is legume-lectin like; it reads DQFTFDGFAG…VLAWSFKMDG (245 aa). Residues asparagine 42, asparagine 61, asparagine 143, asparagine 196, asparagine 219, asparagine 240, and asparagine 281 are each glycosylated (N-linked (GlcNAc...) asparagine). The chain crosses the membrane as a helical span at residues 302-322; it reads ILLPIASAALVSALAIAVLVI. Residues 323 to 674 are Cytoplasmic-facing; sequence HRRRRRYAEL…GNISDIPRAR (352 aa). A Protein kinase domain is found at 357 to 636; the sequence is FSDERLLGFG…LDGAMPLPEL (280 aa). Residues 363-371 and lysine 386 contribute to the ATP site; that span reads LGFGGFGRV. The active-site Proton acceptor is the aspartate 482. Phosphothreonine is present on residues threonine 511, threonine 515, threonine 516, and threonine 521.

It in the C-terminal section; belongs to the protein kinase superfamily. Ser/Thr protein kinase family. In the N-terminal section; belongs to the leguminous lectin family. As to quaternary structure, interacts with B'KAPPA. Post-translationally, autophosphorylated at Thr-511, Thr-515 or Thr-516, and Thr-521 in response to salt stress. Dephosphorylated by phosphatase 2A in response to salt stress. As to expression, expressed in root epidermal cells.

The protein localises to the cell membrane. The catalysed reaction is L-seryl-[protein] + ATP = O-phospho-L-seryl-[protein] + ADP + H(+). It carries out the reaction L-threonyl-[protein] + ATP = O-phospho-L-threonyl-[protein] + ADP + H(+). Activated by autophosphorylation in response to salt stress. Its function is as follows. Lectin-domain containing receptor kinase involved in salt stress response. Acts as a negative regulator of salt tolerance. Mediates salt sensitivity by phosphorylating and activating MPK3 and MPK6. Promotes ethylene production and mediates salt-induced ethylene signaling. Promotes the accumulation of reactive oxygen species (ROS) under salt stress conditions. Its kinase activity is triggered by salt stress and is required for its function in salt stress response. Phosphorylates B'KAPPA, a B regulatory subunit of phosphatase 2A (PP2A). In Oryza sativa subsp. japonica (Rice), this protein is L-type lectin-domain containing receptor kinase SIT1.